The following is a 148-amino-acid chain: MSGFDLSEVAGPVAEVIDDKNEEVEFVVFGVQTQPNKLVVDAKGKGGLEEVKAALKEDALQFAYYRTISGDEESKRVKFVFISWAGEGIKKPKLRAVMSILKGDVKNVINNFHIELHATSLDDLVEDEIAAKIKKAGGADYSFNTTSN.

Positions 1 to 134 (MSGFDLSEVA…VEDEIAAKIK (134 aa)) constitute an ADF-H domain. The F-loop; important for stable binding to G-actin and F-actin motif lies at 71 to 76 (DEESKR). A Phosphoserine modification is found at serine 147.

This sequence belongs to the actin-binding proteins ADF family. Coactosin subfamily. As to quaternary structure, interacts with 14-3-3 protein 3. In terms of processing, phosphorylation at Ser-147 appears not to affect its binding to actin; however, it may regulate phagocytosis and motility.

The protein resides in the cytoplasm. The protein localises to the cell projection. It is found in the phagocytic cup. Its subcellular location is the pseudopodium. It localises to the cell membrane. The protein resides in the cytoskeleton. Functionally, actin-binding protein which is involved in F-actin stabilization. May play a role during phagocytosis and pseudopod formation by contributing to the maintenance of F-actin. This chain is Coactosin, found in Entamoeba histolytica (strain ATCC 30459 / HM-1:IMSS / ABRM).